Consider the following 428-residue polypeptide: Peptidase B (428 aa).

Residues lysine 195 and aspartate 200 each coordinate Mn(2+). The active site involves lysine 207. Aspartate 218, aspartate 277, and glutamate 279 together coordinate Mn(2+). Arginine 281 is an active-site residue.

Belongs to the peptidase M17 family. In terms of assembly, homohexamer. It depends on Mn(2+) as a cofactor.

Its subcellular location is the cytoplasm. It carries out the reaction Release of an N-terminal amino acid, Xaa, from a peptide or arylamide. Xaa is preferably Glu or Asp but may be other amino acids, including Leu, Met, His, Cys and Gln.. In terms of biological role, probably plays an important role in intracellular peptide degradation. This is Peptidase B from Klebsiella pneumoniae (strain 342).